The chain runs to 369 residues: Cytokine receptor common subunit gamma (369 aa).

A signal peptide spans Met-1–Gly-22. The Extracellular segment spans residues Leu-23–Ala-262. Asn-24, Asn-71, Asn-75, and Asn-84 each carry an N-linked (GlcNAc...) asparagine glycan. A disulfide bridge links Cys-62 with Cys-72. A disulfide bridge connects residues Cys-102 and Cys-115. A Fibronectin type-III domain is found at Ala-156–Glu-253. Asn-159 carries an N-linked (GlcNAc...) asparagine glycan. Cys-182 and Cys-231 are oxidised to a cystine. Positions Trp-237 to Ser-241 match the WSXWS motif motif. Residue Asn-249 is glycosylated (N-linked (GlcNAc...) asparagine). Residues Val-263–Leu-283 form a helical membrane-spanning segment. Residues Glu-284–Thr-369 are Cytoplasmic-facing. Positions Thr-286–Lys-294 match the Box 1 motif motif. Residue Thr-292 is modified to Phosphothreonine.

Belongs to the type I cytokine receptor family. Type 5 subfamily. As to quaternary structure, the gamma subunit is common to the IL2, IL4, IL7, IL15, IL21 and probably also the IL13 receptors. Interacts with SHB upon interleukin stimulation. Interacts with IL9. In terms of assembly, (Microbial infection) Interacts with HTLV-1 accessory protein p12I.

Its subcellular location is the cell membrane. It localises to the cell surface. Common subunit for the receptors for a variety of interleukins. Probably in association with IL15RA, involved in the stimulation of neutrophil phagocytosis by IL15. This is Cytokine receptor common subunit gamma (IL2RG) from Homo sapiens (Human).